Reading from the N-terminus, the 137-residue chain is MPKAEGRIFDFKGHDAIRTDFLEAIDFDGKDEYIKIETDEFSAVCPFSGLPDIGRVIIEYYPDGGKIVELKSLKYYFVSFRNVGIYQEEATKRIYEDLKNLLKTDRIRVTVIYNIRGGIKTTTQMGSLEGKKSGEVE.

Residue cysteine 45 is the Thioimide intermediate of the active site. The Proton donor role is filled by aspartate 52. Residues valine 68–leucine 70 and glutamine 87–glutamate 88 each bind substrate.

It belongs to the GTP cyclohydrolase I family. QueF type 1 subfamily.

Its subcellular location is the cytoplasm. The enzyme catalyses 7-aminomethyl-7-carbaguanine + 2 NADP(+) = 7-cyano-7-deazaguanine + 2 NADPH + 3 H(+). It functions in the pathway tRNA modification; tRNA-queuosine biosynthesis. Catalyzes the NADPH-dependent reduction of 7-cyano-7-deazaguanine (preQ0) to 7-aminomethyl-7-deazaguanine (preQ1). The polypeptide is NADPH-dependent 7-cyano-7-deazaguanine reductase (Thermotoga petrophila (strain ATCC BAA-488 / DSM 13995 / JCM 10881 / RKU-1)).